The primary structure comprises 102 residues: Co-chaperonin GroES (102 aa).

The protein belongs to the GroES chaperonin family. In terms of assembly, heptamer of 7 subunits arranged in a ring. Interacts with the chaperonin GroEL.

It localises to the cytoplasm. Together with the chaperonin GroEL, plays an essential role in assisting protein folding. The GroEL-GroES system forms a nano-cage that allows encapsulation of the non-native substrate proteins and provides a physical environment optimized to promote and accelerate protein folding. GroES binds to the apical surface of the GroEL ring, thereby capping the opening of the GroEL channel. In Streptomyces coelicolor (strain ATCC BAA-471 / A3(2) / M145), this protein is Co-chaperonin GroES.